Here is a 179-residue protein sequence, read N- to C-terminus: Large ribosomal subunit protein uL6 (179 aa).

Belongs to the universal ribosomal protein uL6 family. As to quaternary structure, part of the 50S ribosomal subunit.

Its function is as follows. This protein binds to the 23S rRNA, and is important in its secondary structure. It is located near the subunit interface in the base of the L7/L12 stalk, and near the tRNA binding site of the peptidyltransferase center. The chain is Large ribosomal subunit protein uL6 from Kineococcus radiotolerans (strain ATCC BAA-149 / DSM 14245 / SRS30216).